The sequence spans 488 residues: GTPase Der (488 aa).

The EngA-type G 1 domain occupies 3–166 (PVVALVGRPN…YALAPYAEAL (164 aa)). GTP is bound by residues 9-16 (GRPNVGKS), 56-60 (DTGGI), and 118-121 (NKVD). Positions 168 to 192 (LNRDGDDEEEKEEREYTEEEAEAEQ) are disordered. Acidic residues predominate over residues 172-190 (GDDEEEKEEREYTEEEAEA). An EngA-type G 2 domain is found at 200–373 (IKLAVIGKPN…SVQEAYESAT (174 aa)). GTP-binding positions include 206-213 (GKPNVGKS), 253-257 (DTAGV), and 318-321 (NKWD). The KH-like domain occupies 374–458 (RRVSTSMLTR…PIQVRFQDGD (85 aa)).

This sequence belongs to the TRAFAC class TrmE-Era-EngA-EngB-Septin-like GTPase superfamily. EngA (Der) GTPase family. Associates with the 50S ribosomal subunit.

Its function is as follows. GTPase that plays an essential role in the late steps of ribosome biogenesis. In Shewanella woodyi (strain ATCC 51908 / MS32), this protein is GTPase Der.